We begin with the raw amino-acid sequence, 373 residues long: Flap endonuclease 1 (373 aa).

Residues 1–105 (MGIKGLNALI…GELEKRLKRR (105 aa)) are N-domain. Residue D34 participates in Mg(2+) binding. Positions 47 and 71 each coordinate DNA. Mg(2+) contacts are provided by D87, E159, E161, D180, and D182. The interval 123–254 (DIAKFERRTV…VTAFKLIKEH (132 aa)) is I-domain. E159 lines the DNA pocket. 2 residues coordinate DNA: G232 and D234. D234 lines the Mg(2+) pocket. The interaction with PCNA stretch occupies residues 340-348 (TQGRLDKFF). The segment at 347-373 (FFVVKKRPAEEKKGKNTKEEKPKKKRK) is disordered.

The protein belongs to the XPG/RAD2 endonuclease family. FEN1 subfamily. As to quaternary structure, interacts with PCNA. Three molecules of FEN1 bind to one PCNA trimer with each molecule binding to one PCNA monomer. PCNA stimulates the nuclease activity without altering cleavage specificity. Mg(2+) is required as a cofactor. Phosphorylated. Phosphorylation upon DNA damage induces relocalization to the nuclear plasma.

The protein localises to the nucleus. The protein resides in the nucleolus. It localises to the nucleoplasm. It is found in the mitochondrion. Its function is as follows. Structure-specific nuclease with 5'-flap endonuclease and 5'-3' exonuclease activities involved in DNA replication and repair. During DNA replication, cleaves the 5'-overhanging flap structure that is generated by displacement synthesis when DNA polymerase encounters the 5'-end of a downstream Okazaki fragment. It enters the flap from the 5'-end and then tracks to cleave the flap base, leaving a nick for ligation. Also involved in the long patch base excision repair (LP-BER) pathway, by cleaving within the apurinic/apyrimidinic (AP) site-terminated flap. Acts as a genome stabilization factor that prevents flaps from equilibrating into structures that lead to duplications and deletions. Also possesses 5'-3' exonuclease activity on nicked or gapped double-stranded DNA, and exhibits RNase H activity. Also involved in replication and repair of rDNA and in repairing mitochondrial DNA. The protein is Flap endonuclease 1 of Komagataella phaffii (strain GS115 / ATCC 20864) (Yeast).